A 468-amino-acid chain; its full sequence is Adenylyltransferase and sulfurtransferase MOCS3-1 (468 aa).

ATP-binding positions include Gly111, Asp132, 139 to 143, Lys156, and 200 to 201; these read NNLHR and DN. Positions 241 and 244 each coordinate Zn(2+). Cys258 functions as the Glycyl thioester intermediate; for adenylyltransferase activity in the catalytic mechanism. 2 residues coordinate Zn(2+): Cys316 and Cys319. The 96-residue stretch at 371-466 folds into the Rhodanese domain; that stretch reads DGEPHLLLDV…WGRDVDPDFP (96 aa). The Cysteine persulfide intermediate; for sulfurtransferase activity role is filled by Cys426.

In the N-terminal section; belongs to the HesA/MoeB/ThiF family. UBA4 subfamily. Requires Zn(2+) as cofactor.

The protein resides in the cytoplasm. It catalyses the reaction [molybdopterin-synthase sulfur-carrier protein]-C-terminal Gly-Gly + ATP + H(+) = [molybdopterin-synthase sulfur-carrier protein]-C-terminal Gly-Gly-AMP + diphosphate. The catalysed reaction is [molybdopterin-synthase sulfur-carrier protein]-C-terminal Gly-Gly-AMP + S-sulfanyl-L-cysteinyl-[cysteine desulfurase] + AH2 = [molybdopterin-synthase sulfur-carrier protein]-C-terminal-Gly-aminoethanethioate + L-cysteinyl-[cysteine desulfurase] + A + AMP + 2 H(+). It functions in the pathway tRNA modification; 5-methoxycarbonylmethyl-2-thiouridine-tRNA biosynthesis. Its pathway is cofactor biosynthesis; molybdopterin biosynthesis. Functionally, plays a central role in 2-thiolation of mcm(5)S(2)U at tRNA wobble positions of cytosolic tRNA(Lys), tRNA(Glu) and tRNA(Gln). Also essential during biosynthesis of the molybdenum cofactor. Acts by mediating the C-terminal thiocarboxylation of sulfur carriers URM1 and MOCS2A. Its N-terminus first activates URM1 and MOCS2A as acyl-adenylates (-COAMP), then the persulfide sulfur on the catalytic cysteine is transferred to URM1 and MOCS2A to form thiocarboxylation (-COSH) of their C-terminus. The reaction probably involves hydrogen sulfide that is generated from the persulfide intermediate and that acts as a nucleophile towards URM1 and MOCS2A. Subsequently, a transient disulfide bond is formed. Does not use thiosulfate as sulfur donor; NFS1 probably acting as a sulfur donor for thiocarboxylation reactions. The protein is Adenylyltransferase and sulfurtransferase MOCS3-1 of Zea mays (Maize).